A 301-amino-acid polypeptide reads, in one-letter code: Heat shock factor protein HSF24 (301 aa).

A DNA-binding region spans residues 7-101; it reads PAPFLLKTYQ…LLTAIRRRKT (95 aa). 2 disordered regions span residues 103-160 and 221-244; these read TSTP…DENE and GVKD…DEKG. The span at 107-142 shows a compositional bias: low complexity; the sequence is AGGKSVAAGASASPDNSGDDIGSSSTSSPDSKNPGS. Residues 233 to 243 show a composition bias toward acidic residues; the sequence is DNDDKEDDDEK.

It belongs to the HSF family. As to quaternary structure, homotrimer. Exhibits temperature-dependent phosphorylation.

It is found in the nucleus. In terms of biological role, DNA-binding protein that specifically binds heat shock promoter elements (HSE) and activates transcription. This chain is Heat shock factor protein HSF24 (HSF24), found in Solanum peruvianum (Peruvian tomato).